Consider the following 425-residue polypeptide: Histidine--tRNA ligase (425 aa).

Belongs to the class-II aminoacyl-tRNA synthetase family. In terms of assembly, homodimer.

The protein resides in the cytoplasm. The enzyme catalyses tRNA(His) + L-histidine + ATP = L-histidyl-tRNA(His) + AMP + diphosphate + H(+). The chain is Histidine--tRNA ligase from Listeria monocytogenes serovar 1/2a (strain ATCC BAA-679 / EGD-e).